Here is a 412-residue protein sequence, read N- to C-terminus: Gamma-glutamyl phosphate reductase (412 aa).

The protein belongs to the gamma-glutamyl phosphate reductase family.

The protein resides in the cytoplasm. The catalysed reaction is L-glutamate 5-semialdehyde + phosphate + NADP(+) = L-glutamyl 5-phosphate + NADPH + H(+). It functions in the pathway amino-acid biosynthesis; L-proline biosynthesis; L-glutamate 5-semialdehyde from L-glutamate: step 2/2. Functionally, catalyzes the NADPH-dependent reduction of L-glutamate 5-phosphate into L-glutamate 5-semialdehyde and phosphate. The product spontaneously undergoes cyclization to form 1-pyrroline-5-carboxylate. The polypeptide is Gamma-glutamyl phosphate reductase (Actinobacillus pleuropneumoniae serotype 3 (strain JL03)).